A 259-amino-acid chain; its full sequence is uncharacterized protein (259 aa).

Disordered regions lie at residues 22-68 (GLQP…VSFG), 111-133 (REEQ…DEVE), and 181-202 (LGGK…KKKQ). The segment covering 50-63 (NEEEDAISDMEDKE) has biased composition (acidic residues). S127 carries the post-translational modification Phosphoserine.

This is an uncharacterized protein from Schizosaccharomyces pombe (strain 972 / ATCC 24843) (Fission yeast).